The chain runs to 284 residues: 4-diphosphocytidyl-2-C-methyl-D-erythritol kinase (284 aa).

The active site involves K14. Residue 97–107 (PMGGGLGGGSS) coordinates ATP. The active site involves D139.

Belongs to the GHMP kinase family. IspE subfamily.

The enzyme catalyses 4-CDP-2-C-methyl-D-erythritol + ATP = 4-CDP-2-C-methyl-D-erythritol 2-phosphate + ADP + H(+). The protein operates within isoprenoid biosynthesis; isopentenyl diphosphate biosynthesis via DXP pathway; isopentenyl diphosphate from 1-deoxy-D-xylulose 5-phosphate: step 3/6. In terms of biological role, catalyzes the phosphorylation of the position 2 hydroxy group of 4-diphosphocytidyl-2C-methyl-D-erythritol. The protein is 4-diphosphocytidyl-2-C-methyl-D-erythritol kinase of Psychromonas ingrahamii (strain DSM 17664 / CCUG 51855 / 37).